Consider the following 1610-residue polypeptide: E3 ubiquitin-protein ligase listerin (1610 aa).

Residues M1–G10 are compositionally biased toward basic and acidic residues. Residues M1–S20 are disordered. HEAT repeat units lie at residues L110–A148, V314–T351, I372–D408, C409–K443, S590–E626, L627–F664, K736–E773, G965–N1003, C1119–V1156, R1322–D1354, L1355–A1393, and F1435–R1473. The segment at C1558–R1604 adopts an RING-type; atypical zinc-finger fold.

It belongs to the LTN1 family. As to quaternary structure, component of the ribosome quality control complex (RQC), composed of the E3 ubiquitin ligase rkr1/ltn1, rqc1 and mtr1/rqc2, as well as cdc48 and its ubiquitin-binding cofactors. RQC forms a stable complex with 60S ribosomal subunits.

It localises to the nucleus. Its subcellular location is the cytoplasm. The protein localises to the cytosol. The catalysed reaction is S-ubiquitinyl-[E2 ubiquitin-conjugating enzyme]-L-cysteine + [acceptor protein]-L-lysine = [E2 ubiquitin-conjugating enzyme]-L-cysteine + N(6)-ubiquitinyl-[acceptor protein]-L-lysine.. It participates in protein modification; protein ubiquitination. Its function is as follows. E3 ubiquitin-protein ligase component of the ribosome quality control complex (RQC), a ribosome-associated complex that mediates ubiquitination and extraction of incompletely synthesized nascent chains for proteasomal degradation. Mediates ubiquitination of proteins derived from mRNAs lacking stop codons (non-stop proteins) and other translation arrest products induced by poly-lysine sequences and tandem rare codons. Ubiquitination leads to cdc48 recruitment for extraction and degradation of the incomplete translation product. May indirectly play a role in chromatin function and transcription. This is E3 ubiquitin-protein ligase listerin from Schizosaccharomyces pombe (strain 972 / ATCC 24843) (Fission yeast).